Consider the following 231-residue polypeptide: Trypsin-2 (231 aa).

A signal peptide spans 1 to 4 (AAFA). The propeptide at 5–9 (TEDDK) is activation peptide. Residues 10–229 (IVGGYECKAY…FNDWLTSTMA (220 aa)) enclose the Peptidase S1 domain. 6 disulfide bridges follow: cysteine 16–cysteine 145, cysteine 34–cysteine 50, cysteine 118–cysteine 218, cysteine 125–cysteine 191, cysteine 156–cysteine 170, and cysteine 181–cysteine 205. Histidine 49 acts as the Charge relay system in catalysis. Glutamate 61, asparagine 63, valine 66, and glutamate 71 together coordinate Ca(2+). Aspartate 93 (charge relay system) is an active-site residue. The active-site Charge relay system is serine 185.

This sequence belongs to the peptidase S1 family. Requires Ca(2+) as cofactor.

The protein localises to the secreted. It is found in the extracellular space. It catalyses the reaction Preferential cleavage: Arg-|-Xaa, Lys-|-Xaa.. The sequence is that of Trypsin-2 from Salmo salar (Atlantic salmon).